Here is a 456-residue protein sequence, read N- to C-terminus: tRNA modification GTPase MnmE (456 aa).

Residues Arg21, Glu85, and Lys124 each coordinate (6S)-5-formyl-5,6,7,8-tetrahydrofolate. Residues 220–379 (QFRIVLYGEP…LLDAIKERTG (160 aa)) form the TrmE-type G domain. Asn230 is a binding site for K(+). GTP is bound by residues 230–235 (NTGKSS), 249–255 (SEIPGTT), and 274–277 (DTAG). Ser234 lines the Mg(2+) pocket. The K(+) site is built by Ser249, Ile251, and Thr254. Thr255 is a Mg(2+) binding site. Lys456 provides a ligand contact to (6S)-5-formyl-5,6,7,8-tetrahydrofolate.

This sequence belongs to the TRAFAC class TrmE-Era-EngA-EngB-Septin-like GTPase superfamily. TrmE GTPase family. Homodimer. Heterotetramer of two MnmE and two MnmG subunits. The cofactor is K(+).

It is found in the cytoplasm. Exhibits a very high intrinsic GTPase hydrolysis rate. Involved in the addition of a carboxymethylaminomethyl (cmnm) group at the wobble position (U34) of certain tRNAs, forming tRNA-cmnm(5)s(2)U34. The polypeptide is tRNA modification GTPase MnmE (Leptospira interrogans serogroup Icterohaemorrhagiae serovar copenhageni (strain Fiocruz L1-130)).